A 97-amino-acid polypeptide reads, in one-letter code: Large ribosomal subunit protein eL21 (97 aa).

The protein belongs to the eukaryotic ribosomal protein eL21 family.

This is Large ribosomal subunit protein eL21 from Methanococcus aeolicus (strain ATCC BAA-1280 / DSM 17508 / OCM 812 / Nankai-3).